A 322-amino-acid chain; its full sequence is tRNA-dihydrouridine(16) synthase (322 aa).

FMN is bound by residues 7-9 (PME) and glutamine 68. The active-site Proton donor is cysteine 98. FMN-binding positions include lysine 139, 200–202 (NGE), and 224–225 (CR).

The protein belongs to the Dus family. DusC subfamily. FMN serves as cofactor.

It catalyses the reaction 5,6-dihydrouridine(16) in tRNA + NADP(+) = uridine(16) in tRNA + NADPH + H(+). The enzyme catalyses 5,6-dihydrouridine(16) in tRNA + NAD(+) = uridine(16) in tRNA + NADH + H(+). Functionally, catalyzes the synthesis of 5,6-dihydrouridine (D), a modified base found in the D-loop of most tRNAs, via the reduction of the C5-C6 double bond in target uridines. Specifically modifies U16 in tRNAs. The chain is tRNA-dihydrouridine(16) synthase from Vibrio parahaemolyticus serotype O3:K6 (strain RIMD 2210633).